A 203-amino-acid polypeptide reads, in one-letter code: Urease accessory protein UreG (203 aa).

Position 13 to 20 (13 to 20 (GPVGSGKT)) interacts with GTP.

This sequence belongs to the SIMIBI class G3E GTPase family. UreG subfamily. As to quaternary structure, homodimer. UreD, UreF and UreG form a complex that acts as a GTP-hydrolysis-dependent molecular chaperone, activating the urease apoprotein by helping to assemble the nickel containing metallocenter of UreC. The UreE protein probably delivers the nickel.

It is found in the cytoplasm. Functionally, facilitates the functional incorporation of the urease nickel metallocenter. This process requires GTP hydrolysis, probably effectuated by UreG. The chain is Urease accessory protein UreG from Psychromonas ingrahamii (strain DSM 17664 / CCUG 51855 / 37).